A 130-amino-acid chain; its full sequence is MADTQYYGTGRRKSSTARVFLRAGSGNIVVNKRPLDEFFGRETARMIVRQPLELVEMTEKFDLYVTVAGGGISGQAGAIRHGITRALMEFDETLRPSLRKAGFVTRDARKVERKKVGLHKARKRPQFSKR.

The protein belongs to the universal ribosomal protein uS9 family.

In Pseudoalteromonas atlantica (strain T6c / ATCC BAA-1087), this protein is Small ribosomal subunit protein uS9.